Consider the following 770-residue polypeptide: Transcription activator AMTR1 (770 aa).

The zn(2)-C6 fungal-type DNA-binding region spans 7–34 (CLTCRQRKLKCDEKKPVCRQCAKASREC).

The protein resides in the nucleus. In terms of biological role, transcription factor that regulates the expression of the gene clusters that mediate the biosynthesis of AM-toxins, host-selective toxins (HSTs) causing Alternaria blotch on apple, a worldwide distributed disease. AM-toxins have two target sites for affecting susceptible apple cells; they cause invagination of the plasma membrane and electrolyte loss and chloroplast disorganization. This is Transcription activator AMTR1 from Alternaria alternata (Alternaria rot fungus).